A 478-amino-acid chain; its full sequence is Protein nucleotidyltransferase YdiU (478 aa).

ATP-binding residues include glycine 84, glycine 86, arginine 87, lysine 107, aspartate 119, glycine 120, arginine 170, and arginine 177. Aspartate 246 acts as the Proton acceptor in catalysis. Positions 247 and 256 each coordinate Mg(2+). Aspartate 256 serves as a coordination point for ATP.

It belongs to the SELO family. The cofactor is Mg(2+). It depends on Mn(2+) as a cofactor.

It carries out the reaction L-seryl-[protein] + ATP = 3-O-(5'-adenylyl)-L-seryl-[protein] + diphosphate. The enzyme catalyses L-threonyl-[protein] + ATP = 3-O-(5'-adenylyl)-L-threonyl-[protein] + diphosphate. The catalysed reaction is L-tyrosyl-[protein] + ATP = O-(5'-adenylyl)-L-tyrosyl-[protein] + diphosphate. It catalyses the reaction L-histidyl-[protein] + UTP = N(tele)-(5'-uridylyl)-L-histidyl-[protein] + diphosphate. It carries out the reaction L-seryl-[protein] + UTP = O-(5'-uridylyl)-L-seryl-[protein] + diphosphate. The enzyme catalyses L-tyrosyl-[protein] + UTP = O-(5'-uridylyl)-L-tyrosyl-[protein] + diphosphate. In terms of biological role, nucleotidyltransferase involved in the post-translational modification of proteins. It can catalyze the addition of adenosine monophosphate (AMP) or uridine monophosphate (UMP) to a protein, resulting in modifications known as AMPylation and UMPylation. This Escherichia coli (strain SE11) protein is Protein nucleotidyltransferase YdiU.